A 1100-amino-acid chain; its full sequence is DNA repair protein RAD1 (1100 aa).

A disordered region spans residues 1-47 (MSQLFYQGDSDDELQEELTRQTTQASQSSKIKNEDEPDDSNHLNEVE). A compositionally biased stretch (polar residues) spans 20–30 (RQTTQASQSSK). Basic and acidic residues predominate over residues 31-47 (IKNEDEPDDSNHLNEVE). Ser613 carries the phosphoserine modification. The 81-residue stretch at 821-901 (VVIVDTREFN…YPTLLIEFDE (81 aa)) folds into the ERCC4 domain. Residues 1063 to 1100 (EKEEQEQESTDENLESPGKTTDDNALHDHHNDVPEAPV) form a disordered region. The span at 1065 to 1076 (EEQEQESTDENL) shows a compositional bias: acidic residues. Ser1071 is modified (phosphoserine). Thr1072 is modified (phosphothreonine). Basic and acidic residues predominate over residues 1082 to 1100 (TTDDNALHDHHNDVPEAPV).

It belongs to the XPF family. Component of the nucleotide excision repair factor 1 (NEF1) complex consisting of RAD1, RAD10 and RAD14. Interacts with SAW1.

The protein resides in the nucleus. Involved in nucleotide excision repair of DNA damaged with UV light, bulky adducts, or cross-linking agents. Along with RAD10 forms an endonuclease that specifically degrades single-stranded DNA. The polypeptide is DNA repair protein RAD1 (RAD1) (Saccharomyces cerevisiae (strain ATCC 204508 / S288c) (Baker's yeast)).